Consider the following 584-residue polypeptide: 2-isopropylmalate synthase (584 aa).

In terms of domain architecture, Pyruvate carboxyltransferase spans 45 to 323 (PRWLSTDLRD…SPNLDFSKLD (279 aa)). A divalent metal cation contacts are provided by Asp54, His262, His264, and Asn298.

This sequence belongs to the alpha-IPM synthase/homocitrate synthase family. LeuA type 2 subfamily. Homodimer. The cofactor is a divalent metal cation.

The catalysed reaction is 3-methyl-2-oxobutanoate + acetyl-CoA + H2O = (2S)-2-isopropylmalate + CoA + H(+). It participates in amino-acid biosynthesis; L-leucine biosynthesis; L-leucine from 3-methyl-2-oxobutanoate: step 1/4. Functionally, catalyzes the condensation of the acetyl group of acetyl-CoA with 3-methyl-2-oxobutanoate (2-oxoisovalerate) to form 3-carboxy-3-hydroxy-4-methylpentanoate (2-isopropylmalate). This Schizosaccharomyces pombe (strain 972 / ATCC 24843) (Fission yeast) protein is 2-isopropylmalate synthase (leu3).